The following is a 702-amino-acid chain: DnaJ homolog subfamily C member 14 (702 aa).

Disordered regions lie at residues 1-148 (MAQK…GGNG) and 165-229 (DELE…KRSQ). Over residues 75–84 (HGPPGGPGPP) the composition is skewed to pro residues. Residues 88–103 (EDPDQSETSSEEESGV) are compositionally biased toward acidic residues. The span at 113–133 (TGNQKDGNSFLSIPSACNCQG) shows a compositional bias: polar residues. Residues 165 to 175 (DELEEEYDDEE) show a composition bias toward acidic residues. The span at 192 to 201 (PPSRRQRHRF) shows a compositional bias: basic residues. Residues 202 to 217 (PTKEDTREGGRRDPRS) are compositionally biased toward basic and acidic residues. Residues 218–227 (PGRHRLGRKR) show a composition bias toward basic residues. A run of 3 helical transmembrane segments spans residues 250 to 270 (AGFW…ETCG), 300 to 320 (GWAQ…VGLF), and 326 to 346 (LLGA…QLGW). Positions 443–507 (NPFHVLGVEA…EKRKEYEMKR (65 aa)) constitute a J domain. Positions 658 to 702 (MPNGNFFAAPQPAPGAAAASKPNSTVPKGEAKPKRRKKVRRPFQR) are disordered. Over residues 659 to 676 (PNGNFFAAPQPAPGAAAA) the composition is skewed to low complexity. The segment covering 690–702 (PKRRKKVRRPFQR) has biased composition (basic residues).

As to quaternary structure, interacts with the FxxxFxxxF motif of DRD1 via its C-terminal domain. Highly expressed in pancreas and selectively expressed in brain, lung, liver, skeletal muscle and kidney.

It is found in the endoplasmic reticulum membrane. Regulates the export of target proteins, such as DRD1, from the endoplasmic reticulum to the cell surface. The chain is DnaJ homolog subfamily C member 14 (DNAJC14) from Homo sapiens (Human).